A 382-amino-acid polypeptide reads, in one-letter code: tRNA (guanine(37)-N(1))-methyltransferase (382 aa).

Residues histidine 205, 243–244, 269–270, and asparagine 291 contribute to the S-adenosyl-L-methionine site; these read DL and DA.

This sequence belongs to the class I-like SAM-binding methyltransferase superfamily. TRM5/TYW2 family. In terms of assembly, monomer.

It localises to the mitochondrion matrix. The protein localises to the nucleus. It is found in the cytoplasm. It catalyses the reaction guanosine(37) in tRNA + S-adenosyl-L-methionine = N(1)-methylguanosine(37) in tRNA + S-adenosyl-L-homocysteine + H(+). Its function is as follows. Specifically methylates the N1 position of guanosine-37 in various cytoplasmic and mitochondrial tRNAs. Methylation is not dependent on the nature of the nucleoside 5' of the target nucleoside. This is the first step in the biosynthesis of wybutosine (yW), a modified base adjacent to the anticodon of tRNAs and required for accurate decoding. The sequence is that of tRNA (guanine(37)-N(1))-methyltransferase from Entamoeba histolytica (strain ATCC 30459 / HM-1:IMSS / ABRM).